A 338-amino-acid chain; its full sequence is Large ribosomal subunit protein uL10 (338 aa).

The interval 302 to 338 (IAAQPQPAEEAEEKVEEEEEEEKEEEEALAGLGALFG) is disordered. The segment covering 310–329 (EEAEEKVEEEEEEEKEEEEA) has biased composition (acidic residues).

Belongs to the universal ribosomal protein uL10 family. As to quaternary structure, part of the 50S ribosomal subunit. Forms part of the ribosomal stalk which helps the ribosome interact with GTP-bound translation factors. Forms a heptameric L10(L12)2(L12)2(L12)2 complex, where L10 forms an elongated spine to which the L12 dimers bind in a sequential fashion.

Forms part of the ribosomal stalk, playing a central role in the interaction of the ribosome with GTP-bound translation factors. This is Large ribosomal subunit protein uL10 from Thermococcus sibiricus (strain DSM 12597 / MM 739).